The primary structure comprises 268 residues: Glutamate racemase (268 aa).

Substrate is bound by residues 13–14 (DS) and 45–46 (YG). Catalysis depends on C77, which acts as the Proton donor/acceptor. 78 to 79 (NT) is a substrate binding site. Residue C185 is the Proton donor/acceptor of the active site. 186-187 (TH) contacts substrate.

This sequence belongs to the aspartate/glutamate racemases family.

The catalysed reaction is L-glutamate = D-glutamate. It participates in cell wall biogenesis; peptidoglycan biosynthesis. Functionally, provides the (R)-glutamate required for cell wall biosynthesis. In Vibrio campbellii (strain ATCC BAA-1116), this protein is Glutamate racemase.